The chain runs to 361 residues: Phosphoserine aminotransferase (361 aa).

Residue arginine 42 participates in L-glutamate binding. Pyridoxal 5'-phosphate contacts are provided by residues 76-77 (AR), tryptophan 102, threonine 153, aspartate 173, and glutamine 196. Lysine 197 is modified (N6-(pyridoxal phosphate)lysine). Pyridoxal 5'-phosphate is bound at residue 238-239 (NT).

This sequence belongs to the class-V pyridoxal-phosphate-dependent aminotransferase family. SerC subfamily. As to quaternary structure, homodimer. Requires pyridoxal 5'-phosphate as cofactor.

The protein localises to the cytoplasm. The catalysed reaction is O-phospho-L-serine + 2-oxoglutarate = 3-phosphooxypyruvate + L-glutamate. It carries out the reaction 4-(phosphooxy)-L-threonine + 2-oxoglutarate = (R)-3-hydroxy-2-oxo-4-phosphooxybutanoate + L-glutamate. It participates in amino-acid biosynthesis; L-serine biosynthesis; L-serine from 3-phospho-D-glycerate: step 2/3. It functions in the pathway cofactor biosynthesis; pyridoxine 5'-phosphate biosynthesis; pyridoxine 5'-phosphate from D-erythrose 4-phosphate: step 3/5. Its function is as follows. Catalyzes the reversible conversion of 3-phosphohydroxypyruvate to phosphoserine and of 3-hydroxy-2-oxo-4-phosphonooxybutanoate to phosphohydroxythreonine. This chain is Phosphoserine aminotransferase, found in Buchnera aphidicola subsp. Acyrthosiphon pisum (strain 5A).